Consider the following 342-residue polypeptide: Ketol-acid reductoisomerase (NADP(+)) (342 aa).

The 180-residue stretch at 2–181 (VKVYYNGDIK…GGARAGVLET (180 aa)) folds into the KARI N-terminal Rossmann domain. NADP(+) contacts are provided by residues 25–28 (YGSQ), arginine 48, serine 52, and 82–85 (DEQQ). The active site involves histidine 107. Residue glycine 133 coordinates NADP(+). Residues 182-327 (TFKEETETDL…RKLREMMPFV (146 aa)) enclose the KARI C-terminal knotted domain. Aspartate 190, glutamate 194, glutamate 226, and glutamate 230 together coordinate Mg(2+). Serine 251 serves as a coordination point for substrate.

This sequence belongs to the ketol-acid reductoisomerase family. It depends on Mg(2+) as a cofactor.

The enzyme catalyses (2R)-2,3-dihydroxy-3-methylbutanoate + NADP(+) = (2S)-2-acetolactate + NADPH + H(+). It catalyses the reaction (2R,3R)-2,3-dihydroxy-3-methylpentanoate + NADP(+) = (S)-2-ethyl-2-hydroxy-3-oxobutanoate + NADPH + H(+). Its pathway is amino-acid biosynthesis; L-isoleucine biosynthesis; L-isoleucine from 2-oxobutanoate: step 2/4. The protein operates within amino-acid biosynthesis; L-valine biosynthesis; L-valine from pyruvate: step 2/4. In terms of biological role, involved in the biosynthesis of branched-chain amino acids (BCAA). Catalyzes an alkyl-migration followed by a ketol-acid reduction of (S)-2-acetolactate (S2AL) to yield (R)-2,3-dihydroxy-isovalerate. In the isomerase reaction, S2AL is rearranged via a Mg-dependent methyl migration to produce 3-hydroxy-3-methyl-2-ketobutyrate (HMKB). In the reductase reaction, this 2-ketoacid undergoes a metal-dependent reduction by NADPH to yield (R)-2,3-dihydroxy-isovalerate. This is Ketol-acid reductoisomerase (NADP(+)) from Bacillus subtilis (strain 168).